Here is a 264-residue protein sequence, read N- to C-terminus: MNRSTISPVEARQQFRAGLIQPTSGWSAGFAQANLISMPQDLAYDFLLFAQRNPKPCPILEVLNAGETFGGIFGSNATEADIRTDAPQYRIYEHGELIDSPASAVDYWRDDLVSFIIGCSFTFEHPMVQAGVPVRHLEAGRNVPMYETSLACRPAGSLSGNLVVSLRMIPASQVADAVRITSRYPAVHGAPVHIGDPSLIGIDDINNPDFGDAPLSEPGDVPVFWACGVTPQAMVMSSKPPLAITHAPGHMLITDAPDLGFQVP.

Belongs to the D-glutamate cyclase family.

This chain is Putative hydro-lyase cgR_2449, found in Corynebacterium glutamicum (strain R).